Reading from the N-terminus, the 111-residue chain is Large ribosomal subunit protein uL24 (111 aa).

It belongs to the universal ribosomal protein uL24 family. As to quaternary structure, part of the 50S ribosomal subunit.

One of two assembly initiator proteins, it binds directly to the 5'-end of the 23S rRNA, where it nucleates assembly of the 50S subunit. Functionally, one of the proteins that surrounds the polypeptide exit tunnel on the outside of the subunit. The protein is Large ribosomal subunit protein uL24 of Bifidobacterium longum (strain DJO10A).